Reading from the N-terminus, the 399-residue chain is Glutathione S-transferase LANCL1 (399 aa).

Position 2 is an N-acetylalanine (Ala2). An N6-acetyllysine modification is found at Lys142. Cys276 lines the Zn(2+) pocket. Lys317 serves as a coordination point for glutathione. Residues Cys322 and His323 each coordinate Zn(2+). A glutathione-binding site is contributed by 364–367 (RTAD).

Belongs to the LanC-like protein family. Interacts with the C-terminal of STOM. Interacts with the EPS8 SH3 domain. Interaction with EPS8 is inhibited by glutathione binding. Detected in spinal cord (at protein level). Ubiquitous. Strongly expressed in brain, testis, alveolar macrophages and epithelial cells of the lung, kidney and intestine. Expression in brain increases during the first postnatal month and remaining high in adult.

It is found in the cytoplasm. The protein resides in the cell membrane. The catalysed reaction is RX + glutathione = an S-substituted glutathione + a halide anion + H(+). It carries out the reaction 1-chloro-2,4-dinitrobenzene + glutathione = 2,4-dinitrophenyl-S-glutathione + chloride + H(+). Functionally, functions as a glutathione transferase. Catalyzes conjugation of the glutathione (GSH) to artificial substrates 1-chloro-2,4-dinitrobenzene (CDNB) and p-nitrophenyl acetate. Mitigates neuronal oxidative stress during normal postnatal development and in response to oxidative stresses probably through GSH antioxidant defense mechanism. May play a role in EPS8 signaling. Binds glutathione. The sequence is that of Glutathione S-transferase LANCL1 from Mus musculus (Mouse).